A 521-amino-acid polypeptide reads, in one-letter code: Glucose-1-phosphate adenylyltransferase small subunit, chloroplastic/amyloplastic (521 aa).

The disordered stretch occupies residues 1 to 32 (MAASIGALKSSPSSNNCINERRNDSTRAVSSR). A chloroplast-targeting transit peptide spans 1–72 (MAASIGALKS…RSPMIVSPKA (72 aa)). Residue Lys-268 coordinates substrate. Residues 444–454 (TDADRKLLAAK) form an allosteric regulation region.

The protein belongs to the bacterial/plant glucose-1-phosphate adenylyltransferase family. In terms of assembly, heterotetramer. In terms of tissue distribution, leaves and tubers.

It is found in the plastid. The protein resides in the chloroplast. Its subcellular location is the amyloplast. It carries out the reaction alpha-D-glucose 1-phosphate + ATP + H(+) = ADP-alpha-D-glucose + diphosphate. Its pathway is glycan biosynthesis; starch biosynthesis. With respect to regulation, activated by 3'phosphoglycerate, inhibited by orthophosphate. Allosteric regulation. In terms of biological role, this protein plays a role in synthesis of starch. It catalyzes the synthesis of the activated glycosyl donor, ADP-glucose from Glc-1-P and ATP. In Solanum tuberosum (Potato), this protein is Glucose-1-phosphate adenylyltransferase small subunit, chloroplastic/amyloplastic.